A 99-amino-acid polypeptide reads, in one-letter code: MDFQKLAQELKKMQNTLSKKQKEFEEKVFDFDYKGYVLVKIKGDLNIEAIEIKTEIVDPEDKETLQDILRAAINEAISITCKERDAIMNATIPKGTGLF.

The protein belongs to the YbaB/EbfC family. Homodimer.

It localises to the cytoplasm. The protein localises to the nucleoid. In terms of biological role, binds to DNA and alters its conformation. May be involved in regulation of gene expression, nucleoid organization and DNA protection. This Ureaplasma parvum serovar 3 (strain ATCC 27815 / 27 / NCTC 11736) protein is Nucleoid-associated protein UPA3_0088.